Here is a 101-residue protein sequence, read N- to C-terminus: Large ribosomal subunit protein P1 (101 aa).

The disordered stretch occupies residues 65 to 89 (AAPAAAPAEEPKEEKKEEKKEEDTT). Residues 73-87 (EEPKEEKKEEKKEED) are compositionally biased toward basic and acidic residues.

This sequence belongs to the eukaryotic ribosomal protein P1/P2 family. In terms of assembly, part of the 50S ribosomal subunit. Homodimer, it forms part of the ribosomal stalk which helps the ribosome interact with GTP-bound translation factors. Forms a heptameric uL10/P0(P1)2(P1)2(P1)2 complex, where uL10/P0 forms an elongated spine to which the P1 dimers bind in a sequential fashion.

Forms part of the ribosomal stalk, playing a central role in the interaction of the ribosome with GTP-bound translation factors. This chain is Large ribosomal subunit protein P1, found in Methanothermococcus thermolithotrophicus (Methanococcus thermolithotrophicus).